Consider the following 339-residue polypeptide: Fructose-1,6-bisphosphatase class 1 (339 aa).

Mg(2+)-binding residues include Glu-101, Asp-120, Leu-122, and Asp-123. Residues 123–126 (DGSS), Asn-215, and Lys-281 each bind substrate. Glu-287 contacts Mg(2+).

Belongs to the FBPase class 1 family. As to quaternary structure, homotetramer. Mg(2+) serves as cofactor.

Its subcellular location is the cytoplasm. It carries out the reaction beta-D-fructose 1,6-bisphosphate + H2O = beta-D-fructose 6-phosphate + phosphate. The protein operates within carbohydrate biosynthesis; gluconeogenesis. The chain is Fructose-1,6-bisphosphatase class 1 from Polynucleobacter necessarius subsp. necessarius (strain STIR1).